We begin with the raw amino-acid sequence, 258 residues long: Casein kinase II subunit beta' (258 aa).

Polar residues predominate over residues 1 to 10 (MGSRSENVGT). The interval 1–29 (MGSRSENVGTVTREGSRVEQDDVLMDDDS) is disordered.

It belongs to the casein kinase 2 subunit beta family. Tetramer composed of an alpha subunit, an alpha' subunit, one beta subunit and one beta' subunit. Interacts with FACT subunits POB3 and SPT16. Interaction with YTA7. Post-translationally, phosphorylated by alpha subunit. The N-terminus is blocked.

Its function is as follows. Regulatory subunit of casein kinase II/CK2. As part of the kinase complex regulates the basal catalytic activity of the alpha subunit a constitutively active serine/threonine-protein kinase that phosphorylates a large number of substrates containing acidic residues C-terminal to the phosphorylated serine or threonine. This chain is Casein kinase II subunit beta', found in Saccharomyces cerevisiae (strain ATCC 204508 / S288c) (Baker's yeast).